We begin with the raw amino-acid sequence, 103 residues long: MARLIFHFVFALILAAYLLSVTDAIPRGWQEPCFCPSKNPYCDCGDDLQVPTTSVISPKPIIEQCARCERNSQCNKVCPATCKYKVCIFNRTCEFSTCHCYRC.

An N-terminal signal peptide occupies residues 1-24 (MARLIFHFVFALILAAYLLSVTDA). Cystine bridges form between Cys44-Cys103, Cys68-Cys87, Cys74-Cys98, and Cys78-Cys100.

It belongs to the DEFL family.

It localises to the secreted. The chain is Defensin-like protein 268 from Arabidopsis thaliana (Mouse-ear cress).